Consider the following 87-residue polypeptide: Small ribosomal subunit protein bS20 (87 aa).

The span at 1–11 shows a compositional bias: basic residues; sequence MANIKSAKKRA. The disordered stretch occupies residues 1–26; that stretch reads MANIKSAKKRAVQSEKRRQHNASQRS.

This sequence belongs to the bacterial ribosomal protein bS20 family.

Its function is as follows. Binds directly to 16S ribosomal RNA. The polypeptide is Small ribosomal subunit protein bS20 (Actinobacillus pleuropneumoniae serotype 5b (strain L20)).